A 313-amino-acid polypeptide reads, in one-letter code: Protein-methionine-sulfoxide reductase catalytic subunit MsrP (313 aa).

A signal peptide (tat-type signal) is located at residues 1 to 44 (MARWRPDMAEREATPEALYLRRREFLALGAAGAVGLLVARGARA). Mo-molybdopterin contacts are provided by residues N76, 79-80 (YE), C134, T169, N217, R222, and 233-235 (GAK).

The protein belongs to the MsrP family. Heterodimer of a catalytic subunit (MsrP) and a heme-binding subunit (MsrQ). It depends on Mo-molybdopterin as a cofactor. Post-translationally, predicted to be exported by the Tat system. The position of the signal peptide cleavage has not been experimentally proven.

The protein localises to the periplasm. It catalyses the reaction L-methionyl-[protein] + a quinone + H2O = L-methionyl-(S)-S-oxide-[protein] + a quinol. It carries out the reaction L-methionyl-[protein] + a quinone + H2O = L-methionyl-(R)-S-oxide-[protein] + a quinol. In terms of biological role, part of the MsrPQ system that repairs oxidized periplasmic proteins containing methionine sulfoxide residues (Met-O), using respiratory chain electrons. Thus protects these proteins from oxidative-stress damage caused by reactive species of oxygen and chlorine generated by the host defense mechanisms. MsrPQ is essential for the maintenance of envelope integrity under bleach stress, rescuing a wide series of structurally unrelated periplasmic proteins from methionine oxidation. The catalytic subunit MsrP is non-stereospecific, being able to reduce both (R-) and (S-) diastereoisomers of methionine sulfoxide. In Anaeromyxobacter sp. (strain K), this protein is Protein-methionine-sulfoxide reductase catalytic subunit MsrP.